A 129-amino-acid chain; its full sequence is UPF0325 protein HCH_00487 (129 aa).

Belongs to the UPF0325 family.

The sequence is that of UPF0325 protein HCH_00487 from Hahella chejuensis (strain KCTC 2396).